The primary structure comprises 402 residues: 5-methylphenazine-1-carboxylate 1-monooxygenase (402 aa).

FAD is bound by residues 14–15, 35–36, 43–45, R106, V132, R191, and D310; these read IG, ES, and LGV. Residues 368–385 show a composition bias toward basic and acidic residues; it reads REKEEWAAASRPKTEKSA. Residues 368–402 are disordered; that stretch reads REKEEWAAASRPKTEKSAALEAITGSYRNQVERPR.

In terms of assembly, monomer in solution. Probably interacts transiently with PhzM. FAD serves as cofactor.

It carries out the reaction 5-methyl-phenazine-1-carboxylate + NADH + O2 + 2 H(+) = pyocyanin + CO2 + NAD(+) + H2O. Its pathway is secondary metabolite biosynthesis; pyocyanine biosynthesis. Its function is as follows. Involved in the biosynthesis of pyocyanine, a blue-pigmented phenazine derivative, which plays a role in virulence. Catalyzes the oxidative decarboxylation of 5-methylphenazine-1-carboxylate (5-methyl-PCA) to pyocyanine. Can also act on phenazine-1-carboxylate (PCA), converting it into 1-hydroxyphenazine (1-HP). However, PCA is a poor substrate. The polypeptide is 5-methylphenazine-1-carboxylate 1-monooxygenase (Pseudomonas aeruginosa (strain ATCC 15692 / DSM 22644 / CIP 104116 / JCM 14847 / LMG 12228 / 1C / PRS 101 / PAO1)).